We begin with the raw amino-acid sequence, 851 residues long: DNA mismatch repair protein MutS (851 aa).

ATP is bound at residue 602–609; it reads GPNMSGKS.

Belongs to the DNA mismatch repair MutS family.

This protein is involved in the repair of mismatches in DNA. It is possible that it carries out the mismatch recognition step. This protein has a weak ATPase activity. In Streptococcus pyogenes serotype M18 (strain MGAS8232), this protein is DNA mismatch repair protein MutS.